We begin with the raw amino-acid sequence, 840 residues long: Putative pentatricopeptide repeat-containing protein At1g31840 (840 aa).

PPR repeat units lie at residues K98–N128, D145–I179, P180–P214, G216–V250, G251–P284, N285–P319, D320–L354, D355–P389, N390–P424, S425–P459, D460–L494, N495–P529, D530–P564, D565–A599, D600–P634, D635–P669, N670–P704, N705–P739, S740–P774, and D775–P809.

The protein belongs to the PPR family. P subfamily.

This is Putative pentatricopeptide repeat-containing protein At1g31840 from Arabidopsis thaliana (Mouse-ear cress).